A 237-amino-acid polypeptide reads, in one-letter code: MEKNDVINFKALEKELQAALAADEKYKRENAAKLRAVEQRVPSYEEFRGIVLASHLKPLEQKDKMGGKRFVPWNCHTTRERTSQDVVTEIPQEKSPFQPTTSAEFYRDWRRHLRSGPERYQALLQLGGPKLGHLFQMDVGFGLLGELLVALAEHARLSDRTAVLGILHSLANTGRFNLNLSLLSHAERESCQRLFQKLQAMSTTRPMQEGLTVEEPSAGLQGEEGLLQELLELYGVH.

Positions 8 to 33 form a coiled coil; sequence NFKALEKELQAALAADEKYKRENAAK.

The protein belongs to the DNAAF19/PR46b family. In terms of assembly, homodimer.

The protein resides in the cytoplasm. It localises to the cell projection. Its subcellular location is the cilium. It is found in the flagellum. Its function is as follows. Dynein-attachment factor required for cilia motility. In Mus musculus (Mouse), this protein is Dynein axonemal assembly factor 19 (Dnaaf19).